We begin with the raw amino-acid sequence, 400 residues long: DNA polymerase IV (400 aa).

A UmuC domain is found at 5–187 (IFLVDMNAFF…LPVEFMNGIG (183 aa)). Mg(2+)-binding residues include D9 and D105. E106 is an active-site residue.

It belongs to the DNA polymerase type-Y family. As to quaternary structure, monomer. It depends on Mg(2+) as a cofactor.

The protein localises to the cytoplasm. It catalyses the reaction DNA(n) + a 2'-deoxyribonucleoside 5'-triphosphate = DNA(n+1) + diphosphate. Its function is as follows. Poorly processive, error-prone DNA polymerase involved in untargeted mutagenesis. Copies undamaged DNA at stalled replication forks, which arise in vivo from mismatched or misaligned primer ends. These misaligned primers can be extended by PolIV. Exhibits no 3'-5' exonuclease (proofreading) activity. May be involved in translesional synthesis, in conjunction with the beta clamp from PolIII. This is DNA polymerase IV from Clostridium kluyveri (strain ATCC 8527 / DSM 555 / NBRC 12016 / NCIMB 10680 / K1).